A 944-amino-acid chain; its full sequence is Translation initiation factor IF-2 (944 aa).

Disordered regions lie at residues 61–157 and 173–281; these read IQAN…KAKQ and TQSN…SHKI. Positions 132-150 are enriched in polar residues; it reads TFENQTPPTENTPKVVSHS. Residues 175–185 show a composition bias toward low complexity; that stretch reads SNANNASNANN. The span at 186–203 shows a compositional bias: basic and acidic residues; sequence AKKEISEVKKQEQEIKRH. Residues 204-215 show a composition bias toward basic residues; the sequence is ENIKRRTGFRVI. Residues 244–259 show a composition bias toward basic and acidic residues; it reads EDIKKEWQEKDKQEAK. Residues 443–612 form the tr-type G domain; sequence ERPPVVTIMG…LIQAGIMELK (170 aa). The tract at residues 452 to 459 is G1; the sequence is GHVDHGKT. 452–459 is a binding site for GTP; it reads GHVDHGKT. The G2 stretch occupies residues 477-481; it reads GITQH. The tract at residues 498 to 501 is G3; that stretch reads DTPG. GTP is bound by residues 498-502 and 552-555; these read DTPGH and NKMD. The tract at residues 552–555 is G4; the sequence is NKMD. The interval 588–590 is G5; the sequence is SAK.

Belongs to the TRAFAC class translation factor GTPase superfamily. Classic translation factor GTPase family. IF-2 subfamily.

The protein resides in the cytoplasm. One of the essential components for the initiation of protein synthesis. Protects formylmethionyl-tRNA from spontaneous hydrolysis and promotes its binding to the 30S ribosomal subunits. Also involved in the hydrolysis of GTP during the formation of the 70S ribosomal complex. This is Translation initiation factor IF-2 (infB) from Helicobacter pylori (strain ATCC 700392 / 26695) (Campylobacter pylori).